The following is a 60-amino-acid chain: uncharacterized protein (60 aa).

Residues 38–58 (SILAGGIIPVLFFFPLFLFLY) traverse the membrane as a helical segment.

The protein localises to the membrane. This is an uncharacterized protein from Saccharomyces cerevisiae (strain ATCC 204508 / S288c) (Baker's yeast).